The sequence spans 635 residues: Threonine--tRNA ligase (635 aa).

Positions 1–61 constitute a TGS domain; sequence MINISFPDGS…DNDCRLRILT (61 aa). Residues 242-533 form a catalytic region; sequence DHRKLGKELD…LIEEYAGRFP (292 aa). Positions 333, 384, and 510 each coordinate Zn(2+).

This sequence belongs to the class-II aminoacyl-tRNA synthetase family. As to quaternary structure, homodimer. The cofactor is Zn(2+).

The protein localises to the cytoplasm. The catalysed reaction is tRNA(Thr) + L-threonine + ATP = L-threonyl-tRNA(Thr) + AMP + diphosphate + H(+). Catalyzes the attachment of threonine to tRNA(Thr) in a two-step reaction: L-threonine is first activated by ATP to form Thr-AMP and then transferred to the acceptor end of tRNA(Thr). Also edits incorrectly charged L-seryl-tRNA(Thr). This Rickettsia bellii (strain RML369-C) protein is Threonine--tRNA ligase.